Consider the following 493-residue polypeptide: Glutamyl-tRNA(Gln) amidotransferase subunit A (493 aa).

Active-site charge relay system residues include Lys-79 and Ser-159. Residue Ser-183 is the Acyl-ester intermediate of the active site.

This sequence belongs to the amidase family. GatA subfamily. As to quaternary structure, heterotrimer of A, B and C subunits.

It catalyses the reaction L-glutamyl-tRNA(Gln) + L-glutamine + ATP + H2O = L-glutaminyl-tRNA(Gln) + L-glutamate + ADP + phosphate + H(+). Allows the formation of correctly charged Gln-tRNA(Gln) through the transamidation of misacylated Glu-tRNA(Gln) in organisms which lack glutaminyl-tRNA synthetase. The reaction takes place in the presence of glutamine and ATP through an activated gamma-phospho-Glu-tRNA(Gln). This is Glutamyl-tRNA(Gln) amidotransferase subunit A from Allorhizobium ampelinum (strain ATCC BAA-846 / DSM 112012 / S4) (Agrobacterium vitis (strain S4)).